The chain runs to 192 residues: uncharacterized protein (192 aa).

The 132-residue stretch at 29-160 (HRQAAVLIPI…PLDIYRRGDS (132 aa)) folds into the Nudix hydrolase domain. The Nudix box motif lies at 67-89 (GAVDDTDASAIAAALREAEEEVA). 2 residues coordinate Mg(2+): Glu-83 and Glu-87.

Belongs to the Nudix hydrolase family. PCD1 subfamily. The cofactor is Mn(2+). Mg(2+) serves as cofactor.

In terms of biological role, probably mediates the hydrolysis of some nucleoside diphosphate derivatives. This is an uncharacterized protein from Escherichia coli (strain K12).